We begin with the raw amino-acid sequence, 450 residues long: Folate synthesis bifunctional protein (450 aa).

An HPPK region spans residues 1–166; sequence MTSWNFVCLS…TFAELAAIYP (166 aa). Residues 180–441 form the Pterin-binding domain; sequence TQIMGIVNIT…QVEGNRRALA (262 aa). The tract at residues 182-450 is DHPS; that stretch reads IMGIVNITDN…AAAAWAGMFV (269 aa). N187 serves as a coordination point for Mg(2+). (7,8-dihydropterin-6-yl)methyl diphosphate-binding positions include T227, D267, N287, D358, K395, and 429–431; that span reads RVH.

It in the C-terminal section; belongs to the DHPS family. This sequence in the N-terminal section; belongs to the HPPK family. Mg(2+) serves as cofactor.

The enzyme catalyses 6-hydroxymethyl-7,8-dihydropterin + ATP = (7,8-dihydropterin-6-yl)methyl diphosphate + AMP + H(+). It catalyses the reaction (7,8-dihydropterin-6-yl)methyl diphosphate + 4-aminobenzoate = 7,8-dihydropteroate + diphosphate. The protein operates within cofactor biosynthesis; tetrahydrofolate biosynthesis; 2-amino-4-hydroxy-6-hydroxymethyl-7,8-dihydropteridine diphosphate from 7,8-dihydroneopterin triphosphate: step 4/4. It functions in the pathway cofactor biosynthesis; tetrahydrofolate biosynthesis; 7,8-dihydrofolate from 2-amino-4-hydroxy-6-hydroxymethyl-7,8-dihydropteridine diphosphate and 4-aminobenzoate: step 1/2. In Chlamydia trachomatis serovar D (strain ATCC VR-885 / DSM 19411 / UW-3/Cx), this protein is Folate synthesis bifunctional protein (folKP).